Here is a 276-residue protein sequence, read N- to C-terminus: Pirin-like protein CC_0481 (276 aa).

It belongs to the pirin family.

In Caulobacter vibrioides (strain ATCC 19089 / CIP 103742 / CB 15) (Caulobacter crescentus), this protein is Pirin-like protein CC_0481.